A 476-amino-acid chain; its full sequence is Bifunctional protein HldE (476 aa).

The tract at residues 1–319 (MKVSLPAFEK…EALALHHGES (319 aa)) is ribokinase. Position 195-198 (195-198 (NMSE)) interacts with ATP. The active site involves Asp264. Residues 345–476 (MTNGCFDILH…AIIQNIMANQ (132 aa)) are cytidylyltransferase.

It in the N-terminal section; belongs to the carbohydrate kinase PfkB family. This sequence in the C-terminal section; belongs to the cytidylyltransferase family. As to quaternary structure, homodimer.

It carries out the reaction D-glycero-beta-D-manno-heptose 7-phosphate + ATP = D-glycero-beta-D-manno-heptose 1,7-bisphosphate + ADP + H(+). The enzyme catalyses D-glycero-beta-D-manno-heptose 1-phosphate + ATP + H(+) = ADP-D-glycero-beta-D-manno-heptose + diphosphate. The protein operates within nucleotide-sugar biosynthesis; ADP-L-glycero-beta-D-manno-heptose biosynthesis; ADP-L-glycero-beta-D-manno-heptose from D-glycero-beta-D-manno-heptose 7-phosphate: step 1/4. It functions in the pathway nucleotide-sugar biosynthesis; ADP-L-glycero-beta-D-manno-heptose biosynthesis; ADP-L-glycero-beta-D-manno-heptose from D-glycero-beta-D-manno-heptose 7-phosphate: step 3/4. Functionally, catalyzes the phosphorylation of D-glycero-D-manno-heptose 7-phosphate at the C-1 position to selectively form D-glycero-beta-D-manno-heptose-1,7-bisphosphate. Catalyzes the ADP transfer from ATP to D-glycero-beta-D-manno-heptose 1-phosphate, yielding ADP-D-glycero-beta-D-manno-heptose. In Shewanella baltica (strain OS155 / ATCC BAA-1091), this protein is Bifunctional protein HldE.